The following is a 109-amino-acid chain: Large ribosomal subunit protein uL22 (109 aa).

The protein belongs to the universal ribosomal protein uL22 family. As to quaternary structure, part of the 50S ribosomal subunit.

In terms of biological role, this protein binds specifically to 23S rRNA; its binding is stimulated by other ribosomal proteins, e.g. L4, L17, and L20. It is important during the early stages of 50S assembly. It makes multiple contacts with different domains of the 23S rRNA in the assembled 50S subunit and ribosome. Functionally, the globular domain of the protein is located near the polypeptide exit tunnel on the outside of the subunit, while an extended beta-hairpin is found that lines the wall of the exit tunnel in the center of the 70S ribosome. This chain is Large ribosomal subunit protein uL22, found in Leptothrix cholodnii (strain ATCC 51168 / LMG 8142 / SP-6) (Leptothrix discophora (strain SP-6)).